Consider the following 252-residue polypeptide: MTLVSDHENDDMNPFRVRSRREVIALLRSIGERNQLVRMVINHGADTIVTSILNIDETNDTVLLDCAPTAIMNQRVLDSNKLSFETVLENIRILFNSPSAESCMYENLPAFVIPLPTSVVRLQRREFYRVPTPLTAPVSCTVPYTTEGVTIEVATTLHNISGGGVSLVDEKKLLSTTIGLTYQNCKIVLPGSGLITVALQVRNVLELTLTNGKSINRIGCEFINPSNGTLATVQKYITKIEREQNAKATGLG.

In terms of domain architecture, PilZ spans 123-238 (QRREFYRVPT…TLATVQKYIT (116 aa)).

Belongs to the YcgR family. In terms of assembly, monomer. Interacts with the flagellar basal bodies.

It localises to the bacterial flagellum basal body. Its function is as follows. Acts as a flagellar brake, regulating swimming and swarming in a bis-(3'-5') cyclic diguanylic acid (c-di-GMP)-dependent manner. Binds 1 c-di-GMP dimer per subunit. Increasing levels of c-di-GMP lead to decreased motility. The protein is Flagellar brake protein YcgR of Janthinobacterium sp. (strain Marseille) (Minibacterium massiliensis).